A 299-amino-acid polypeptide reads, in one-letter code: B-box zinc finger protein 22 (299 aa).

Residues cysteine 5, cysteine 8, cysteine 28, histidine 33, cysteine 57, cysteine 60, cysteine 80, and histidine 85 each contribute to the Zn(2+) site. A B box-type 1; atypical zinc finger spans residues 5 to 47 (CNVCEAAEATVLCCADEAALCWACDEKIHAANKLAGKHQRVPL). Residues 57 to 99 (CDICQEASGFFFCLQDRALLCRKCDVAIHTVNPHVSAHQRFLL) form a B box-type 2; atypical zinc finger. Disordered stretches follow at residues 143-181 (FDHHHHQQQQEQQEGVIPGTKVNDQTSTKLPLVSSGSTT) and 206-299 (ENNG…RRRF). Polar residues-rich tracts occupy residues 164 to 181 (VNDQTSTKLPLVSSGSTT), 251 to 260 (QIQSPPTASG), and 277 to 290 (ITSSTPYTGSSPNQ).

Interacts with HY5. In terms of processing, ubiquitinated by COP1 in vitro. COP1-mediated degradation of BBX22 by the proteasome occurs in the dark and is important for a precise skotomorphogenesis process and optimization of seedling growth under short days conditions.

It localises to the nucleus. In terms of biological role, acts as a positive regulator of seedling photomorphogenesis and light-regulated inhibition of hypocotyl elongation, independently and in concert with HY5 and BBX21. Acts as a positive regulator of de-etiolation and influences chloroplast biogenesis and function through regulation of genes encoding chloroplast proteins. Acts downstream of COP1 and plays an important role in early and long-term adjustment of the shade avoidance syndrome (SAS) responses in natural environments. Regulates the expression of genes responsive to light hormone signals which may contribute to optimal seedling development. This chain is B-box zinc finger protein 22, found in Arabidopsis thaliana (Mouse-ear cress).